Consider the following 388-residue polypeptide: Flap endonuclease 1 (388 aa).

Positions 1 to 104 (MGILGLSKLI…GELAKRAERR (104 aa)) are N-domain. Position 34 (Asp34) interacts with Mg(2+). Residues Arg47 and Arg70 each contribute to the DNA site. Residues Asp86, Glu158, Glu160, Asp179, and Asp181 each contribute to the Mg(2+) site. Residues 122-253 (QIEKFNRRLV…KRAIELIKSY (132 aa)) form an I-domain region. Glu158 contributes to the DNA binding site. Residues Gly231 and Asp233 each contribute to the DNA site. Asp233 contributes to the Mg(2+) binding site. The interaction with PCNA stretch occupies residues 336 to 344 (TQVRLDSFF). Residues 355 to 388 (AAAKRKAEESKKSANSKKAKIGGGSGAGRGRRPK) are disordered.

The protein belongs to the XPG/RAD2 endonuclease family. FEN1 subfamily. Interacts with PCNA. Three molecules of FEN1 bind to one PCNA trimer with each molecule binding to one PCNA monomer. PCNA stimulates the nuclease activity without altering cleavage specificity. The cofactor is Mg(2+). Phosphorylated. Phosphorylation upon DNA damage induces relocalization to the nuclear plasma.

It localises to the nucleus. The protein localises to the nucleolus. It is found in the nucleoplasm. The protein resides in the mitochondrion. Functionally, structure-specific nuclease with 5'-flap endonuclease and 5'-3' exonuclease activities involved in DNA replication and repair. During DNA replication, cleaves the 5'-overhanging flap structure that is generated by displacement synthesis when DNA polymerase encounters the 5'-end of a downstream Okazaki fragment. It enters the flap from the 5'-end and then tracks to cleave the flap base, leaving a nick for ligation. Also involved in the long patch base excision repair (LP-BER) pathway, by cleaving within the apurinic/apyrimidinic (AP) site-terminated flap. Acts as a genome stabilization factor that prevents flaps from equilibrating into structures that lead to duplications and deletions. Also possesses 5'-3' exonuclease activity on nicked or gapped double-stranded DNA, and exhibits RNase H activity. Also involved in replication and repair of rDNA and in repairing mitochondrial DNA. This Drosophila grimshawi (Hawaiian fruit fly) protein is Flap endonuclease 1.